A 350-amino-acid polypeptide reads, in one-letter code: LysM domain-containing GPI-anchored protein 2 (350 aa).

Residues 1 to 23 form the signal peptide; the sequence is METSCFTLLGLLVSLSFFLTLSA. N-linked (GlcNAc...) asparagine glycans are attached at residues asparagine 30, asparagine 48, asparagine 76, and asparagine 99. 4 disulfide bridges follow: cysteine 31–cysteine 97, cysteine 38–cysteine 161, cysteine 95–cysteine 159, and cysteine 97–cysteine 161. LysM domains lie at 108-155 and 172-216; these read IEYT…KFWI and YAHV…PLDV. Residues 114 to 120 and 142 to 149 each bind chitin; these read KDDILSF and PDPNKIEI. N-linked (GlcNAc...) asparagine glycans are attached at residues asparagine 193, asparagine 238, asparagine 258, asparagine 289, and asparagine 305. 2 disulfide bridges follow: cysteine 221-cysteine 253 and cysteine 248-cysteine 277. Aspartate 318 carries the GPI-anchor amidated aspartate lipid modification. The propeptide at 319–350 is removed in mature form; sequence SAGPDNYASTLSSSFNFVIVLIQCALLCLCLL.

In terms of assembly, forms homooligomers. Interacts with CERK1. Binds to chitin oligosaccharide elicitor.

It is found in the cell membrane. Functionally, chitin elicitor-binding protein involved in the perception of chitin oligosaccharide elicitor. The protein is LysM domain-containing GPI-anchored protein 2 (LYM2) of Arabidopsis thaliana (Mouse-ear cress).